We begin with the raw amino-acid sequence, 482 residues long: tRNA sulfurtransferase (482 aa).

The THUMP domain maps to 61–165 (LAIRDALTRI…DDRLLLIKGR (105 aa)). Residues 183-184 (LI), lysine 265, glycine 287, and glutamine 296 each bind ATP. Cysteine 344 and cysteine 456 are disulfide-bonded. Residues 404-482 (FGPNDVILDI…GFANVKVYRP (79 aa)) form the Rhodanese domain. Cysteine 456 acts as the Cysteine persulfide intermediate in catalysis.

It belongs to the ThiI family.

The protein localises to the cytoplasm. The enzyme catalyses [ThiI sulfur-carrier protein]-S-sulfanyl-L-cysteine + a uridine in tRNA + 2 reduced [2Fe-2S]-[ferredoxin] + ATP + H(+) = [ThiI sulfur-carrier protein]-L-cysteine + a 4-thiouridine in tRNA + 2 oxidized [2Fe-2S]-[ferredoxin] + AMP + diphosphate. The catalysed reaction is [ThiS sulfur-carrier protein]-C-terminal Gly-Gly-AMP + S-sulfanyl-L-cysteinyl-[cysteine desulfurase] + AH2 = [ThiS sulfur-carrier protein]-C-terminal-Gly-aminoethanethioate + L-cysteinyl-[cysteine desulfurase] + A + AMP + 2 H(+). The protein operates within cofactor biosynthesis; thiamine diphosphate biosynthesis. Its function is as follows. Catalyzes the ATP-dependent transfer of a sulfur to tRNA to produce 4-thiouridine in position 8 of tRNAs, which functions as a near-UV photosensor. Also catalyzes the transfer of sulfur to the sulfur carrier protein ThiS, forming ThiS-thiocarboxylate. This is a step in the synthesis of thiazole, in the thiamine biosynthesis pathway. The sulfur is donated as persulfide by IscS. This chain is tRNA sulfurtransferase, found in Salmonella heidelberg (strain SL476).